The sequence spans 467 residues: ATP synthase subunit beta (467 aa).

152–159 (GGAGVGKT) lines the ATP pocket.

This sequence belongs to the ATPase alpha/beta chains family. In terms of assembly, F-type ATPases have 2 components, CF(1) - the catalytic core - and CF(0) - the membrane proton channel. CF(1) has five subunits: alpha(3), beta(3), gamma(1), delta(1), epsilon(1). CF(0) has three main subunits: a(1), b(2) and c(9-12). The alpha and beta chains form an alternating ring which encloses part of the gamma chain. CF(1) is attached to CF(0) by a central stalk formed by the gamma and epsilon chains, while a peripheral stalk is formed by the delta and b chains.

The protein resides in the cell membrane. It carries out the reaction ATP + H2O + 4 H(+)(in) = ADP + phosphate + 5 H(+)(out). Produces ATP from ADP in the presence of a proton gradient across the membrane. The catalytic sites are hosted primarily by the beta subunits. This is ATP synthase subunit beta from Caldicellulosiruptor saccharolyticus (strain ATCC 43494 / DSM 8903 / Tp8T 6331).